We begin with the raw amino-acid sequence, 171 residues long: Nicotinamide-nucleotide adenylyltransferase (171 aa).

Belongs to the archaeal NMN adenylyltransferase family.

It is found in the cytoplasm. The enzyme catalyses beta-nicotinamide D-ribonucleotide + ATP + H(+) = diphosphate + NAD(+). The protein operates within cofactor biosynthesis; NAD(+) biosynthesis; NAD(+) from nicotinamide D-ribonucleotide: step 1/1. In Methanococcus maripaludis (strain C6 / ATCC BAA-1332), this protein is Nicotinamide-nucleotide adenylyltransferase.